The primary structure comprises 154 residues: Superoxide dismutase [Cu-Zn] (154 aa).

The Cu cation site is built by H47, H49, and H64. A disulfide bond links C58 and C147. Zn(2+) is bound by residues H64, H72, H81, and D84. H121 is a binding site for Cu cation. Substrate is bound at residue R144.

This sequence belongs to the Cu-Zn superoxide dismutase family. In terms of assembly, homodimer. Cu cation serves as cofactor. Requires Zn(2+) as cofactor.

It localises to the cytoplasm. It catalyses the reaction 2 superoxide + 2 H(+) = H2O2 + O2. In terms of biological role, destroys radicals which are normally produced within the cells and which are toxic to biological systems. This chain is Superoxide dismutase [Cu-Zn] (SOD1), found in Claviceps purpurea (strain 20.1) (Ergot fungus).